A 291-amino-acid chain; its full sequence is GTPase Era (291 aa).

An Era-type G domain is found at 2–167; sequence KSGFVSIIGR…LDEIVKCLNE (166 aa). Positions 10 to 17 are G1; sequence GRTNAGKS. A GTP-binding site is contributed by 10–17; that stretch reads GRTNAGKS. Positions 36 to 40 are G2; sequence NATRR. Positions 57 to 60 are G3; it reads DTPG. Residues 57–61 and 116–119 contribute to the GTP site; these read DTPGL and NKVD. The interval 116–119 is G4; that stretch reads NKVD. The interval 146-148 is G5; sequence YSS. Positions 186-274 constitute a KH type-2 domain; sequence YRDFILESIY…LLKLFVTVKK (89 aa).

This sequence belongs to the TRAFAC class TrmE-Era-EngA-EngB-Septin-like GTPase superfamily. Era GTPase family. In terms of assembly, monomer.

The protein resides in the cytoplasm. It is found in the cell inner membrane. Its function is as follows. An essential GTPase that binds both GDP and GTP, with rapid nucleotide exchange. Plays a role in 16S rRNA processing and 30S ribosomal subunit biogenesis and possibly also in cell cycle regulation and energy metabolism. The chain is GTPase Era from Campylobacter jejuni subsp. doylei (strain ATCC BAA-1458 / RM4099 / 269.97).